A 120-amino-acid polypeptide reads, in one-letter code: Aspartate 1-decarboxylase (120 aa).

S25 functions as the Schiff-base intermediate with substrate; via pyruvic acid in the catalytic mechanism. Residue S25 is modified to Pyruvic acid (Ser). Substrate is bound at residue T57. Residue Y58 is the Proton donor of the active site. Position 73 to 75 (73 to 75) interacts with substrate; sequence GAA.

Belongs to the PanD family. Heterooctamer of four alpha and four beta subunits. It depends on pyruvate as a cofactor. Post-translationally, is synthesized initially as an inactive proenzyme, which is activated by self-cleavage at a specific serine bond to produce a beta-subunit with a hydroxyl group at its C-terminus and an alpha-subunit with a pyruvoyl group at its N-terminus.

The protein resides in the cytoplasm. It carries out the reaction L-aspartate + H(+) = beta-alanine + CO2. The protein operates within cofactor biosynthesis; (R)-pantothenate biosynthesis; beta-alanine from L-aspartate: step 1/1. Catalyzes the pyruvoyl-dependent decarboxylation of aspartate to produce beta-alanine. The sequence is that of Aspartate 1-decarboxylase from Thermosipho africanus (strain TCF52B).